The sequence spans 279 residues: Shikimate dehydrogenase (NADP(+)) (279 aa).

Shikimate is bound by residues serine 14–serine 16 and threonine 62. The active-site Proton acceptor is lysine 66. Shikimate is bound by residues asparagine 87 and aspartate 103. Residues glycine 127–alanine 131, asparagine 151–lysine 156, and methionine 215 each bind NADP(+). Tyrosine 217 contributes to the shikimate binding site. Glycine 239 serves as a coordination point for NADP(+).

It belongs to the shikimate dehydrogenase family. As to quaternary structure, homodimer.

It catalyses the reaction shikimate + NADP(+) = 3-dehydroshikimate + NADPH + H(+). It functions in the pathway metabolic intermediate biosynthesis; chorismate biosynthesis; chorismate from D-erythrose 4-phosphate and phosphoenolpyruvate: step 4/7. Its function is as follows. Involved in the biosynthesis of the chorismate, which leads to the biosynthesis of aromatic amino acids. Catalyzes the reversible NADPH linked reduction of 3-dehydroshikimate (DHSA) to yield shikimate (SA). The chain is Shikimate dehydrogenase (NADP(+)) from Alteromonas mediterranea (strain DSM 17117 / CIP 110805 / LMG 28347 / Deep ecotype).